A 353-amino-acid polypeptide reads, in one-letter code: Thiamine-phosphate synthase (353 aa).

Residues 1–128 form a unknown region; sequence MELMVVEADA…ASTAAEIRYG (128 aa). The segment at 129 to 353 is thiamine-phosphate synthase; the sequence is LYDLEVRILE…ASRTLLQTLA (225 aa). 4-amino-2-methyl-5-(diphosphooxymethyl)pyrimidine is bound by residues 185–189 and asparagine 217; that span reads QYRRK. Mg(2+) contacts are provided by aspartate 218 and aspartate 237. 4-amino-2-methyl-5-(diphosphooxymethyl)pyrimidine is bound at residue serine 256. 282–284 is a binding site for 2-[(2R,5Z)-2-carboxy-4-methylthiazol-5(2H)-ylidene]ethyl phosphate; it reads TKT. Lysine 285 contributes to the 4-amino-2-methyl-5-(diphosphooxymethyl)pyrimidine binding site. Glycine 312 contacts 2-[(2R,5Z)-2-carboxy-4-methylthiazol-5(2H)-ylidene]ethyl phosphate.

The protein belongs to the thiamine-phosphate synthase family. Mg(2+) is required as a cofactor.

The enzyme catalyses 2-[(2R,5Z)-2-carboxy-4-methylthiazol-5(2H)-ylidene]ethyl phosphate + 4-amino-2-methyl-5-(diphosphooxymethyl)pyrimidine + 2 H(+) = thiamine phosphate + CO2 + diphosphate. It carries out the reaction 2-(2-carboxy-4-methylthiazol-5-yl)ethyl phosphate + 4-amino-2-methyl-5-(diphosphooxymethyl)pyrimidine + 2 H(+) = thiamine phosphate + CO2 + diphosphate. It catalyses the reaction 4-methyl-5-(2-phosphooxyethyl)-thiazole + 4-amino-2-methyl-5-(diphosphooxymethyl)pyrimidine + H(+) = thiamine phosphate + diphosphate. Its pathway is cofactor biosynthesis; thiamine diphosphate biosynthesis; thiamine phosphate from 4-amino-2-methyl-5-diphosphomethylpyrimidine and 4-methyl-5-(2-phosphoethyl)-thiazole: step 1/1. In terms of biological role, condenses 4-methyl-5-(beta-hydroxyethyl)thiazole monophosphate (THZ-P) and 2-methyl-4-amino-5-hydroxymethyl pyrimidine pyrophosphate (HMP-PP) to form thiamine monophosphate (TMP). The polypeptide is Thiamine-phosphate synthase (Synechococcus sp. (strain CC9311)).